Consider the following 66-residue polypeptide: Ribosome biogenesis protein Nop10 (66 aa).

The protein belongs to the NOP10 family.

Functionally, involved in ribosome biogenesis; more specifically in 18S rRNA pseudouridylation and in cleavage of pre-rRNA. The polypeptide is Ribosome biogenesis protein Nop10 (Staphylothermus marinus (strain ATCC 43588 / DSM 3639 / JCM 9404 / F1)).